We begin with the raw amino-acid sequence, 916 residues long: Isoleucine--tRNA ligase (916 aa).

The 'HIGH' region signature appears at 57–67; the sequence is PYANGNLHMGH. L-isoleucyl-5'-AMP is bound at residue E554. The short motif at 595–599 is the 'KMSKS' region element; it reads KMSKS. An ATP-binding site is contributed by K598. Positions 885, 888, 905, and 908 each coordinate Zn(2+).

Belongs to the class-I aminoacyl-tRNA synthetase family. IleS type 1 subfamily. Monomer. The cofactor is Zn(2+).

The protein localises to the cytoplasm. It carries out the reaction tRNA(Ile) + L-isoleucine + ATP = L-isoleucyl-tRNA(Ile) + AMP + diphosphate. Functionally, catalyzes the attachment of isoleucine to tRNA(Ile). As IleRS can inadvertently accommodate and process structurally similar amino acids such as valine, to avoid such errors it has two additional distinct tRNA(Ile)-dependent editing activities. One activity is designated as 'pretransfer' editing and involves the hydrolysis of activated Val-AMP. The other activity is designated 'posttransfer' editing and involves deacylation of mischarged Val-tRNA(Ile). The protein is Isoleucine--tRNA ligase of Staphylococcus epidermidis (strain ATCC 12228 / FDA PCI 1200).